A 131-amino-acid chain; its full sequence is Agouti-signaling protein (131 aa).

The signal sequence occupies residues 1–22 (MDVTRLLLATLVGFLCFFTVHS). Asn-39 carries an N-linked (GlcNAc...) asparagine glycan. The tract at residues 58–100 (KSKKISRKEAEKRKRSSKKKASMKKVARPPPPSPCVATRDSCK) is disordered. Over residues 70–84 (RKRSSKKKASMKKVA) the composition is skewed to basic residues. 5 cysteine pairs are disulfide-bonded: Cys-92/Cys-107, Cys-99/Cys-113, Cys-106/Cys-124, Cys-110/Cys-131, and Cys-115/Cys-122. An Agouti domain is found at 92–131 (CVATRDSCKPPAPACCDPCASCQCRFFGSACTCRVLNPNC).

Epithelial cells of the hair follicles and the epidermis.

The protein localises to the secreted. Involved in the regulation of melanogenesis. The binding of ASP to MC1R precludes alpha-MSH initiated signaling and thus blocks production of cAMP, leading to a down-regulation of eumelanogenesis (brown/black pigment) and thus increasing synthesis of pheomelanin (yellow/red pigment). Causes hair follicle melanocytes to synthesize phaeomelanin instead of black or brown pigment eumelanin and produces hairs with a subapical yellow band on an otherwise black or brown background when expressed during the mid-portion of hair growth. This chain is Agouti-signaling protein (Asip), found in Mus musculus (Mouse).